The sequence spans 607 residues: Elongation factor 4 (607 aa).

The tr-type G domain maps to 11–193; sequence EKIRNFSIIA…QIVEKVPAPT (183 aa). GTP is bound by residues 23-28 and 140-143; these read DHGKST and NKID.

It belongs to the TRAFAC class translation factor GTPase superfamily. Classic translation factor GTPase family. LepA subfamily.

Its subcellular location is the cell membrane. The catalysed reaction is GTP + H2O = GDP + phosphate + H(+). In terms of biological role, required for accurate and efficient protein synthesis under certain stress conditions. May act as a fidelity factor of the translation reaction, by catalyzing a one-codon backward translocation of tRNAs on improperly translocated ribosomes. Back-translocation proceeds from a post-translocation (POST) complex to a pre-translocation (PRE) complex, thus giving elongation factor G a second chance to translocate the tRNAs correctly. Binds to ribosomes in a GTP-dependent manner. This is Elongation factor 4 from Streptococcus pneumoniae (strain Hungary19A-6).